The chain runs to 314 residues: Olfactory receptor 5G3 (314 aa).

Residues 1–24 (MEDKNQTVVTEFLLLGLTDHPYQK) lie on the Extracellular side of the membrane. N-linked (GlcNAc...) asparagine glycosylation is present at N5. The helical transmembrane segment at 25–45 (IVLFFMFLFVYLITLGGNLGM) threads the bilayer. The Cytoplasmic segment spans residues 46 to 97 (ITLIWIDPRLHTPMYFFLRHLSFVDICSSSSVVPKMLCNIFAEKKDITFLGC). C97 and C179 form a disulfide bridge. The helical transmembrane segment at 98–118 (AAQMWFFGLFEAAECFLLAAM) threads the bilayer. The Extracellular portion of the chain corresponds to 119-143 (AYDRYVAICKPLLYTLIMSQQVCMQ). The chain crosses the membrane as a helical span at residues 144–164 (LVVGPYAMALISTMTHTIFTF). At 165–167 (CLP) the chain is on the cytoplasmic side. A helical membrane pass occupies residues 168-188 (FCGSNIINHFFCDIFPLLSLA). Over 189-196 (CADTWVNK) the chain is Extracellular. A helical transmembrane segment spans residues 197-217 (FVLFVLAGAIGVLSGLIIMVS). Residues 218 to 237 (YICILMTILKIQTADGKQKA) are Cytoplasmic-facing. A helical transmembrane segment spans residues 238–258 (FFTCFSHLAAVSILYGTLFLI). At 259-268 (YVRPSSSSSL) the chain is on the extracellular side. The chain crosses the membrane as a helical span at residues 269 to 289 (GIYKVISLFYTVVIPMVNPLI). Over 290–314 (YSLRNKEVKDAFRRKIERKKFIIGR) the chain is Cytoplasmic.

The protein belongs to the G-protein coupled receptor 1 family.

The protein resides in the cell membrane. Odorant receptor. In Homo sapiens (Human), this protein is Olfactory receptor 5G3 (OR5G3).